The primary structure comprises 61 residues: Small ribosomal subunit protein bS21 (61 aa).

A disordered region spans residues 36 to 61 (EHYESPSVKRKKKAEAARKRKYKYGR). The segment covering 43-61 (VKRKKKAEAARKRKYKYGR) has biased composition (basic residues).

The protein belongs to the bacterial ribosomal protein bS21 family.

This Caldanaerobacter subterraneus subsp. tengcongensis (strain DSM 15242 / JCM 11007 / NBRC 100824 / MB4) (Thermoanaerobacter tengcongensis) protein is Small ribosomal subunit protein bS21 (rpsU).